Here is a 282-residue protein sequence, read N- to C-terminus: Bifunctional protein FolD (282 aa).

NADP(+) is bound by residues 166–168 and serine 191; that span reads GRS.

It belongs to the tetrahydrofolate dehydrogenase/cyclohydrolase family. In terms of assembly, homodimer.

The enzyme catalyses (6R)-5,10-methylene-5,6,7,8-tetrahydrofolate + NADP(+) = (6R)-5,10-methenyltetrahydrofolate + NADPH. It catalyses the reaction (6R)-5,10-methenyltetrahydrofolate + H2O = (6R)-10-formyltetrahydrofolate + H(+). It participates in one-carbon metabolism; tetrahydrofolate interconversion. Functionally, catalyzes the oxidation of 5,10-methylenetetrahydrofolate to 5,10-methenyltetrahydrofolate and then the hydrolysis of 5,10-methenyltetrahydrofolate to 10-formyltetrahydrofolate. This Acidovorax ebreus (strain TPSY) (Diaphorobacter sp. (strain TPSY)) protein is Bifunctional protein FolD.